A 171-amino-acid chain; its full sequence is Large ribosomal subunit protein uL15 (171 aa).

A compositionally biased stretch (polar residues) spans 1–10; the sequence is MKLNEISDNN. Disordered stretches follow at residues 1-44 and 150-171; these read MKLN…RSGV and LPEA…NKAK. The segment covering 21–35 has biased composition (gly residues); sequence RGIGSGKGKTAGRGQ. Residues 157–171 are compositionally biased toward basic and acidic residues; it reads EQEKKAARREANKAK.

It belongs to the universal ribosomal protein uL15 family. As to quaternary structure, part of the 50S ribosomal subunit.

Its function is as follows. Binds to the 23S rRNA. The polypeptide is Large ribosomal subunit protein uL15 (Novosphingobium aromaticivorans (strain ATCC 700278 / DSM 12444 / CCUG 56034 / CIP 105152 / NBRC 16084 / F199)).